Reading from the N-terminus, the 265-residue chain is Probable S-methyl-5'-thioinosine phosphorylase (265 aa).

Phosphate is bound by residues S15 and 55-56 (RH). M187 is a substrate binding site. T188 lines the phosphate pocket. Residue 211-213 (NYA) coordinates substrate.

Belongs to the PNP/MTAP phosphorylase family. MTAP subfamily. Homotrimer.

It carries out the reaction S-methyl-5'-thioinosine + phosphate = 5-(methylsulfanyl)-alpha-D-ribose 1-phosphate + hypoxanthine. The protein operates within purine metabolism; purine nucleoside salvage. Catalyzes the reversible phosphorylation of S-methyl-5'-thioinosine (MTI) to hypoxanthine and 5-methylthioribose-1-phosphate. Involved in the breakdown of S-methyl-5'-thioadenosine (MTA), a major by-product of polyamine biosynthesis. Catabolism of (MTA) occurs via deamination to MTI and phosphorolysis to hypoxanthine. In Thermodesulfovibrio yellowstonii (strain ATCC 51303 / DSM 11347 / YP87), this protein is Probable S-methyl-5'-thioinosine phosphorylase.